The chain runs to 420 residues: MFTRDMQIAGFDDALWDAMQQEVGRQEAHIELIASENYASPRVMQAQGTQLTNKYAEGYPGKRYYGGCEHVDVVEDLAIQYAKELFGATYANVQPHSGSQANGAVFQALVKPGDTVLGMSLDAGGHLTHGAKPNFSGKHYNAVQYGLDENGLIDYDEVARLAREHQPKMIIAGFSAYSQVIDWARFREIADDVGAFLLVDMAHIAGLVAAGVYPSPLPHAHVVTTTTHKTLRGPRGGLILSAENNAEIEKKFQSAVFPGSQGGPLMHVIAAKAICFKEAMEPDFKAYQQQVIDNAKAMAGVFIERGYDVVSGGTEDHLFLLSLVKQGLTGKDADAALGRAHITVNKNAVPNDPQSPFVTSGLRIGTPAVTTRGFGESECADLAGWICDILDAMQQGDASQAEADVKAKVEAVCARLPVYR.

Residues Leu-121 and 125-127 contribute to the (6S)-5,6,7,8-tetrahydrofolate site; that span reads GHL. Lys-229 carries the post-translational modification N6-(pyridoxal phosphate)lysine. (6S)-5,6,7,8-tetrahydrofolate is bound at residue 355-357; that stretch reads SPF.

The protein belongs to the SHMT family. As to quaternary structure, homodimer. Pyridoxal 5'-phosphate is required as a cofactor.

It localises to the cytoplasm. It catalyses the reaction (6R)-5,10-methylene-5,6,7,8-tetrahydrofolate + glycine + H2O = (6S)-5,6,7,8-tetrahydrofolate + L-serine. The protein operates within one-carbon metabolism; tetrahydrofolate interconversion. Its pathway is amino-acid biosynthesis; glycine biosynthesis; glycine from L-serine: step 1/1. Catalyzes the reversible interconversion of serine and glycine with tetrahydrofolate (THF) serving as the one-carbon carrier. This reaction serves as the major source of one-carbon groups required for the biosynthesis of purines, thymidylate, methionine, and other important biomolecules. Also exhibits THF-independent aldolase activity toward beta-hydroxyamino acids, producing glycine and aldehydes, via a retro-aldol mechanism. This chain is Serine hydroxymethyltransferase, found in Chromohalobacter salexigens (strain ATCC BAA-138 / DSM 3043 / CIP 106854 / NCIMB 13768 / 1H11).